We begin with the raw amino-acid sequence, 256 residues long: tRNA pseudouridine synthase A (256 aa).

D55 acts as the Nucleophile in catalysis. Substrate is bound at residue Y113.

Belongs to the tRNA pseudouridine synthase TruA family. In terms of assembly, homodimer.

It catalyses the reaction uridine(38/39/40) in tRNA = pseudouridine(38/39/40) in tRNA. Its function is as follows. Formation of pseudouridine at positions 38, 39 and 40 in the anticodon stem and loop of transfer RNAs. This chain is tRNA pseudouridine synthase A, found in Ligilactobacillus salivarius (strain UCC118) (Lactobacillus salivarius).